Here is a 333-residue protein sequence, read N- to C-terminus: DNA repair and recombination protein RadA (333 aa).

Position 127–134 (127–134) interacts with ATP; sequence GEFGSGKT.

It belongs to the eukaryotic RecA-like protein family.

Functionally, involved in DNA repair and in homologous recombination. Binds and assemble on single-stranded DNA to form a nucleoprotein filament. Hydrolyzes ATP in a ssDNA-dependent manner and promotes DNA strand exchange between homologous DNA molecules. The chain is DNA repair and recombination protein RadA from Pyrobaculum aerophilum (strain ATCC 51768 / DSM 7523 / JCM 9630 / CIP 104966 / NBRC 100827 / IM2).